A 356-amino-acid polypeptide reads, in one-letter code: Sterol-4-alpha-carboxylate 3-dehydrogenase, decarboxylating (356 aa).

Methionine 1 carries the post-translational modification N-acetylmethionine. The active-site Proton acceptor is the tyrosine 155. Residue lysine 159 coordinates NAD(+). The chain crosses the membrane as a helical span at residues 281 to 301 (WLAYYLALLVSLLVMVISPVI). A Prevents secretion from ER motif is present at residues 353–356 (RKVM).

The protein belongs to the 3-beta-HSD family. In terms of assembly, homodimer.

It localises to the endoplasmic reticulum membrane. Its subcellular location is the lipid droplet. It carries out the reaction a 3beta-hydroxysteroid-4alpha-carboxylate + NADP(+) = a 3-oxosteroid + CO2 + NADPH. The catalysed reaction is a 3beta-hydroxysteroid-4alpha-carboxylate + NAD(+) = a 3-oxosteroid + CO2 + NADH. It catalyses the reaction 4alpha-carboxyzymosterol + NADP(+) = zymosterone + CO2 + NADPH. The enzyme catalyses 4alpha-carboxy-4beta-methyl-5alpha-cholest-8-en-3beta-ol + NADP(+) = 4alpha-methyl-5alpha-cholest-8-en-3-one + CO2 + NADPH. It carries out the reaction 4alpha-carboxy-5alpha-cholest-8-ene-3beta-ol + NADP(+) = 5alpha-cholest-8-en-3-one + CO2 + NADPH. The catalysed reaction is 4beta-methylzymosterol-4alpha-carboxylate + NADP(+) = 3-dehydro-4-methylzymosterol + CO2 + NADPH. It catalyses the reaction 4beta-methylzymosterol-4alpha-carboxylate + NAD(+) = 3-dehydro-4-methylzymosterol + CO2 + NADH. The enzyme catalyses 4alpha-carboxy-5alpha-cholest-8-ene-3beta-ol + NAD(+) = 5alpha-cholest-8-en-3-one + CO2 + NADH. It carries out the reaction 4alpha-carboxy-4beta-methyl-5alpha-cholest-8-en-3beta-ol + NAD(+) = 4alpha-methyl-5alpha-cholest-8-en-3-one + CO2 + NADH. The catalysed reaction is 4alpha-carboxyzymosterol + NAD(+) = zymosterone + CO2 + NADH. It participates in steroid biosynthesis; zymosterol biosynthesis; zymosterol from lanosterol: step 4/6. Functionally, catalyzes the NAD(P)(+)-dependent oxidative decarboxylation of the C4 methyl groups of 4-alpha-carboxysterols in post-squalene cholesterol biosynthesis. Also plays a role in the regulation of the endocytic trafficking of EGFR. The polypeptide is Sterol-4-alpha-carboxylate 3-dehydrogenase, decarboxylating (NSDHL) (Bos taurus (Bovine)).